Here is a 578-residue protein sequence, read N- to C-terminus: Probable ATP-dependent RNA helicase DDX55 homolog (578 aa).

A Q motif motif is present at residues 7-37 (PVALKTFREKLGPELLEVFDKSYKSFTDVQV). Positions 40–218 (GTHLLNLSDV…VFGLRNAKQV (179 aa)) constitute a Helicase ATP-binding domain. 53–60 (SPTGSGKT) contacts ATP. A DEAD box motif is present at residues 166–169 (DEAD). The 163-residue stretch at 231–393 (TLKNYYVECR…EIKVPTNNSR (163 aa)) folds into the Helicase C-terminal domain. The segment at 507–557 (AAKDKKRREKEARKLKKMGGRFRNGGGTGRKAEEKKALKRKAEEEDDAQND) is disordered. Residues 510–526 (DKKRREKEARKLKKMGG) show a composition bias toward basic residues. A compositionally biased stretch (basic and acidic residues) spans 536–549 (RKAEEKKALKRKAE).

Belongs to the DEAD box helicase family. DDX55/SPB4 subfamily.

The enzyme catalyses ATP + H2O = ADP + phosphate + H(+). In terms of biological role, probable ATP-binding RNA helicase. The polypeptide is Probable ATP-dependent RNA helicase DDX55 homolog (Caenorhabditis elegans).